Consider the following 381-residue polypeptide: Ubiquitin-associated protein 1-like (381 aa).

The region spanning 4–50 is the UMA domain; the sequence is LDGVPFKLPKGFVIGTEPLPGPELSVPACGEVLLGSMHDFSLERTAL. Disordered regions lie at residues 87-141 and 185-228; these read LAPA…PGRR and SLCP…LRSH. A compositionally biased stretch (basic and acidic residues) spans 95–104; it reads RDPEAGHQER. Positions 105-123 are enriched in acidic residues; the sequence is PEEEGEDEAEASSGSEEEP. Low complexity predominate over residues 124-141; that stretch reads APSSLQPGSPASPGPGRR. Positions 197 to 216 are enriched in pro residues; it reads ASPPGPAPQHPAAPASPPRP.

This is Ubiquitin-associated protein 1-like (UBAP1L) from Homo sapiens (Human).